A 508-amino-acid chain; its full sequence is MKRWWFNSMLFKKEFEHRCRLSKSMGSLGPIENASESKDPNRNDTDKNIQGWGGHDNYSNVDLFFGVKDIRNFFSDDTFLVKDSNGDSYSIYFDIENHIFEIANDHPFCSELESSFYRNSSDLNNGSKSKNPDHDRYMDDTQYTWNNHINSCIDSYLQYQICIDNYIVSGNDNSSNNNSSNENSSNENSSNENSSNENSSNDYISSSISSQSENSSQNEDITTSDQTIPESSTHMGVTQQYRHLWVQCENCYGLNYKKFFKSKMHLCEQCGYHLKMSSSDRIELLIDPGTWEPMDEDMVSLDPIEFHSEEEPYKNRIDSYQRNTGLTEAVQTGRGQLNGITVAIGVMDFQFMGGSMGSVVGEKITRLIEYATKEFLPLIIVCASGGARMQEGSVSLMQMAKISSALYDYQSNKKLFYVPILTSPTTGGVTASFGMLGDIIIAEPNAYIAFAGKRVIEQTLNKTVPEGSQAAEYLFQKGLFDLIVPRNPLKSVLSELFQLHTFFPLNQN.

2 disordered regions span residues 30–51 and 173–234; these read PIEN…NIQG and NSSN…SSTH. Basic and acidic residues predominate over residues 35-47; it reads SESKDPNRNDTDK. Positions 173–219 are enriched in low complexity; sequence NSSNNNSSNENSSNENSSNENSSNENSSNDYISSSISSQSENSSQNE. Over residues 220 to 234 the composition is skewed to polar residues; it reads DITTSDQTIPESSTH. Residues 244–508 form the CoA carboxyltransferase N-terminal domain; it reads LWVQCENCYG…LHTFFPLNQN (265 aa). The Zn(2+) site is built by Cys-248, Cys-251, Cys-267, and Cys-270. The segment at 248-270 adopts a C4-type zinc-finger fold; the sequence is CENCYGLNYKKFFKSKMHLCEQC.

It belongs to the AccD/PCCB family. As to quaternary structure, acetyl-CoA carboxylase is a heterohexamer composed of biotin carboxyl carrier protein, biotin carboxylase and 2 subunits each of ACCase subunit alpha and ACCase plastid-coded subunit beta (accD). The cofactor is Zn(2+).

The protein resides in the plastid. The protein localises to the chloroplast stroma. It carries out the reaction N(6)-carboxybiotinyl-L-lysyl-[protein] + acetyl-CoA = N(6)-biotinyl-L-lysyl-[protein] + malonyl-CoA. It participates in lipid metabolism; malonyl-CoA biosynthesis; malonyl-CoA from acetyl-CoA: step 1/1. In terms of biological role, component of the acetyl coenzyme A carboxylase (ACC) complex. Biotin carboxylase (BC) catalyzes the carboxylation of biotin on its carrier protein (BCCP) and then the CO(2) group is transferred by the transcarboxylase to acetyl-CoA to form malonyl-CoA. The polypeptide is Acetyl-coenzyme A carboxylase carboxyl transferase subunit beta, chloroplastic (Lactuca sativa (Garden lettuce)).